The following is a 748-amino-acid chain: Structure-specific endonuclease subunit SLX4 (748 aa).

Polar residues predominate over residues 62–75; it reads KSVTAQKSPMTQET. Residues 62–104 form a disordered region; that stretch reads KSVTAQKSPMTQETTKNDTERNKDVDKSCNPVSTSHPDLGGSN. At threonine 72 the chain carries Phosphothreonine; by ATR and ATM. Residues 76 to 88 are compositionally biased toward basic and acidic residues; that stretch reads TKNDTERNKDVDK. Position 113 is a phosphothreonine; by ATR and ATM (threonine 113). Disordered regions lie at residues 215 to 236 and 277 to 303; these read IKTQ…KGEK and EKSS…PPEL. The segment covering 222–236 has biased composition (basic and acidic residues); sequence NSDKPPRARNNKGEK. Residues 277–298 show a composition bias toward polar residues; sequence EKSSNSLDNQESSQQRLWTASQ. Phosphoserine; by ATR and ATM is present on serine 289. At threonine 319 the chain carries Phosphothreonine; by ATR and ATM. A phosphoserine; by ATR and ATM mark is found at serine 329 and serine 355. Polar residues predominate over residues 591 to 602; it reads ISTKDSTQNPTT. The tract at residues 591-610 is disordered; sequence ISTKDSTQNPTTSNDIIDTS.

This sequence belongs to the SLX4 family. In terms of assembly, forms a heterodimer with SLX1. Interacts with RAD1; catalytic subunit of the RAD1-RAD10 endonuclease. Interacts with RTT107. Phosphorylated by ATR (MEC1) and ATM (TEL1) upon DNA damage. This appears to be required for the function with the RAD1-RAD10 endonuclease.

It localises to the nucleus. Its subcellular location is the cytoplasm. Its function is as follows. Regulatory subunit that interacts with and increases the activity of different structure-specific endonucleases. Has several distinct roles in protecting genome stability by resolving diverse forms of deleterious DNA structures. Component of the SLX1-SLX4 structure-specific endonuclease that resolves DNA secondary structures generated during DNA repair and recombination. Has endonuclease activity towards branched DNA substrates, introducing single-strand cuts in duplex DNA close to junctions with ss-DNA. Has a preference for simple Y, 5'-flap and replication fork-like structures. It cleaves the strand bearing the 5'-non-homologous arm at the branch site junction and generates ligatable, nicked products from the 5'-flap or replication fork substrates. Plays a critical role in maintaining the integrity of the ribosomal DNA (rDNA) loci, where it has a role in re-starting stalled replication forks. Has Holliday junction resolvase activity in vitro. Interacts with the structure-specific RAD1-RAD10 endonuclease and promotes RAD1-RAD10-dependent 3'-non-homologous tail removal (NHTR) during repair of double-strand breaks by single-strand annealing. SLX4 also promotes recovery from DNA-alkylation-induced replisome stalling during DNA replication by facilitating the error-free mode of lesion bypass. This does not require SLX1 or RAD1-RAD10, but probably RTT107. This is Structure-specific endonuclease subunit SLX4 from Saccharomyces cerevisiae (strain RM11-1a) (Baker's yeast).